Here is a 213-residue protein sequence, read N- to C-terminus: Thymidylate kinase (213 aa).

10-17 provides a ligand contact to ATP; the sequence is GLEGAGKT.

The protein belongs to the thymidylate kinase family.

It carries out the reaction dTMP + ATP = dTDP + ADP. Phosphorylation of dTMP to form dTDP in both de novo and salvage pathways of dTTP synthesis. This chain is Thymidylate kinase, found in Klebsiella pneumoniae (strain 342).